The primary structure comprises 195 residues: MTKIETLVERARRLKEKGLTTEEIADELNVSRETALWLITRVGETPPSDIYVEWRELTKPSRLRLVAMAMADMIVSEVKEDIEVVVGIATSGIPLAAMVAEELGCEFTIYYPRKFKTDEEKPKGGILSENFARVSGKKCAIVDDITSTGRSIKEAIEVIEANDGKAVCAAVIVNKRGGNEIEGIPLLSMLKILRI.

The protein belongs to the purine/pyrimidine phosphoribosyltransferase family. GfcR subfamily.

The sequence is that of Transcriptional regulator GfcR from Archaeoglobus fulgidus (strain ATCC 49558 / DSM 4304 / JCM 9628 / NBRC 100126 / VC-16).